The following is a 208-amino-acid chain: Holliday junction resolvase RecU (208 aa).

The tract at residues 1 to 28 is disordered; it reads MNYPNGKPYSKNKPLDGRKSSPFSSNIE. 4 residues coordinate Mg(2+): T87, D89, E102, and Q121.

Belongs to the RecU family. Mg(2+) serves as cofactor.

The protein localises to the cytoplasm. The catalysed reaction is Endonucleolytic cleavage at a junction such as a reciprocal single-stranded crossover between two homologous DNA duplexes (Holliday junction).. Endonuclease that resolves Holliday junction intermediates in genetic recombination. Cleaves mobile four-strand junctions by introducing symmetrical nicks in paired strands. Promotes annealing of linear ssDNA with homologous dsDNA. Required for DNA repair, homologous recombination and chromosome segregation. The sequence is that of Holliday junction resolvase RecU from Staphylococcus epidermidis (strain ATCC 12228 / FDA PCI 1200).